Here is a 119-residue protein sequence, read N- to C-terminus: MNLAAYYPVLLFLLVGTGLGIALVSIGKLLGPNKPDVEKNAPYECGFEAFEDARMKFDVRYYLVAILFIIFDLETAFLFPWGVALRDIGWPGFIAMMIFLLEFLLGFAYIWKKGGLDWE.

A run of 3 helical transmembrane segments spans residues 7–27, 63–83, and 88–108; these read YPVL…VSIG, LVAI…PWGV, and IGWP…LGFA.

It belongs to the complex I subunit 3 family. As to quaternary structure, NDH-1 is composed of 14 different subunits. Subunits NuoA, H, J, K, L, M, N constitute the membrane sector of the complex.

Its subcellular location is the cell inner membrane. The catalysed reaction is a quinone + NADH + 5 H(+)(in) = a quinol + NAD(+) + 4 H(+)(out). NDH-1 shuttles electrons from NADH, via FMN and iron-sulfur (Fe-S) centers, to quinones in the respiratory chain. The immediate electron acceptor for the enzyme in this species is believed to be ubiquinone. Couples the redox reaction to proton translocation (for every two electrons transferred, four hydrogen ions are translocated across the cytoplasmic membrane), and thus conserves the redox energy in a proton gradient. The sequence is that of NADH-quinone oxidoreductase subunit A from Burkholderia ambifaria (strain MC40-6).